Here is a 162-residue protein sequence, read N- to C-terminus: Phosphopantetheine adenylyltransferase (162 aa).

Serine 11 is a binding site for substrate. ATP is bound by residues 11–12 (SF) and histidine 19. Residues lysine 43, valine 76, and arginine 90 each coordinate substrate. ATP is bound by residues 91–93 (GLR), glutamate 101, and 126–132 (HLYISSS).

Belongs to the bacterial CoaD family. Homohexamer. Mg(2+) serves as cofactor.

The protein localises to the cytoplasm. It catalyses the reaction (R)-4'-phosphopantetheine + ATP + H(+) = 3'-dephospho-CoA + diphosphate. It functions in the pathway cofactor biosynthesis; coenzyme A biosynthesis; CoA from (R)-pantothenate: step 4/5. With respect to regulation, is inhibited by a series of cycloalkyl pyrimidines, which also show suppression of bacterial growth. In terms of biological role, reversibly transfers an adenylyl group from ATP to 4'-phosphopantetheine, yielding dephospho-CoA (dPCoA) and pyrophosphate. The protein is Phosphopantetheine adenylyltransferase of Streptococcus pneumoniae (strain ATCC BAA-255 / R6).